The sequence spans 206 residues: Pyrrolidone-carboxylate peptidase 2 (206 aa).

Active-site residues include Glu-78, Cys-141, and His-165.

The protein belongs to the peptidase C15 family. Homotetramer.

The protein localises to the cytoplasm. It carries out the reaction Release of an N-terminal pyroglutamyl group from a polypeptide, the second amino acid generally not being Pro.. In terms of biological role, removes 5-oxoproline from various penultimate amino acid residues except L-proline. The chain is Pyrrolidone-carboxylate peptidase 2 from Caldanaerobacter subterraneus subsp. tengcongensis (strain DSM 15242 / JCM 11007 / NBRC 100824 / MB4) (Thermoanaerobacter tengcongensis).